The chain runs to 455 residues: Putative RNA polymerase II subunit B1 CTD phosphatase rpap-2 (455 aa).

The RTR1-type zinc finger occupies E36–G121. Residues C59, C64, C97, and C101 each contribute to the Zn(2+) site.

It belongs to the RPAP2 family.

The protein localises to the nucleus. It catalyses the reaction O-phospho-L-seryl-[protein] + H2O = L-seryl-[protein] + phosphate. It carries out the reaction O-phospho-L-threonyl-[protein] + H2O = L-threonyl-[protein] + phosphate. In terms of biological role, putative RNA polymerase II subunit B1 C-terminal domain (CTD) phosphatase involved in RNA polymerase II transcription regulation. This Caenorhabditis elegans protein is Putative RNA polymerase II subunit B1 CTD phosphatase rpap-2.